We begin with the raw amino-acid sequence, 470 residues long: Coproporphyrinogen III oxidase (470 aa).

Residues 12-17 (GGGITG), 41-42 (EA), Lys49, 63-66 (GPDS), Val256, Trp409, and 448-450 (VGI) contribute to the FAD site.

This sequence belongs to the protoporphyrinogen/coproporphyrinogen oxidase family. Coproporphyrinogen III oxidase subfamily. As to quaternary structure, monomer. Requires FAD as cofactor.

The protein localises to the cytoplasm. The protein resides in the cell membrane. The enzyme catalyses coproporphyrinogen III + 3 O2 = coproporphyrin III + 3 H2O2. It functions in the pathway porphyrin-containing compound metabolism; protoheme biosynthesis. With respect to regulation, only weakly inhibited by acifluorfen, in contrast to eukaryotic family members. Weakly inhibited by methylacifluorfen. Bilirubin, biliverdin and hemin are all competitive inhibitors. In terms of biological role, involved in coproporphyrin-dependent heme b biosynthesis. Catalyzes the oxidation of coproporphyrinogen III to coproporphyrin III. Can also oxidize protoporphyrinogen IX to protoporphyrin-IX. The specific activity for the oxidation of coproporphyrinogen III is much higher than that for the oxidation of protoporphyrinogen IX. Can also oxidize mesoporphyrinogen IX, but not uroporphyrinogen III. The protein is Coproporphyrinogen III oxidase of Bacillus subtilis (strain 168).